The following is a 244-amino-acid chain: tRNA pseudouridine synthase A (244 aa).

Residue D52 is the Nucleophile of the active site. Position 110 (Y110) interacts with substrate.

This sequence belongs to the tRNA pseudouridine synthase TruA family. As to quaternary structure, homodimer.

The enzyme catalyses uridine(38/39/40) in tRNA = pseudouridine(38/39/40) in tRNA. In terms of biological role, formation of pseudouridine at positions 38, 39 and 40 in the anticodon stem and loop of transfer RNAs. The protein is tRNA pseudouridine synthase A of Thermoanaerobacter pseudethanolicus (strain ATCC 33223 / 39E) (Clostridium thermohydrosulfuricum).